The chain runs to 95 residues: Putative ESAT-6-like protein X (95 aa).

The tract at residues 72–95 (HGQKVQRASSSMADTDRSVSSAWS) is disordered.

The protein belongs to the WXG100 family.

This chain is Putative ESAT-6-like protein X, found in Mycobacterium leprae (strain TN).